Here is a 911-residue protein sequence, read N- to C-terminus: Bifunctional aspartokinase/homoserine dehydrogenase 1, chloroplastic (911 aa).

Residues 1–82 (MPVVSLAKVV…VENGHLPKGD (82 aa)) constitute a chloroplast transit peptide. The segment at 83–331 (SWAVHKFGGT…VSEAVVLKTL (249 aa)) is aspartokinase. The interface stretch occupies residues 332–557 (SYQEAWEMSY…LSRTTLAVGI (226 aa)). ACT domains are found at residues 407 to 482 (VEGT…IIPN) and 488 to 565 (AVGQ…LIGG). The homoserine dehydrogenase stretch occupies residues 558-911 (IGPGLIGGTL…RLAFYLGAPS (354 aa)). 2 residues coordinate NAD(+): Ile-563 and Thr-644. Residues Ile-563, Thr-644, and Lys-668 each coordinate NADP(+). NADPH is bound by residues Ile-563, Thr-644, and Lys-668. Residues Glu-695, Val-698, Ala-700, and Leu-702 each coordinate Na(+). Residues Gly-753 and Glu-756 each coordinate NADP(+). L-homoserine is bound by residues Glu-756 and Asp-767. Lys-771 serves as the catalytic Proton donor. Residue Gly-888 participates in NAD(+) binding. Gly-888 serves as a coordination point for NADP(+). Gly-888 is an NADPH binding site.

This sequence in the N-terminal section; belongs to the aspartokinase family. It in the C-terminal section; belongs to the homoserine dehydrogenase family. Homo- or heterodimer. Requires a metal cation as cofactor.

Its subcellular location is the plastid. The protein localises to the chloroplast. It carries out the reaction L-homoserine + NADP(+) = L-aspartate 4-semialdehyde + NADPH + H(+). It catalyses the reaction L-homoserine + NAD(+) = L-aspartate 4-semialdehyde + NADH + H(+). The enzyme catalyses L-aspartate + ATP = 4-phospho-L-aspartate + ADP. Its pathway is amino-acid biosynthesis; L-lysine biosynthesis via DAP pathway; (S)-tetrahydrodipicolinate from L-aspartate: step 1/4. It participates in amino-acid biosynthesis; L-methionine biosynthesis via de novo pathway; L-homoserine from L-aspartate: step 1/3. The protein operates within amino-acid biosynthesis; L-methionine biosynthesis via de novo pathway; L-homoserine from L-aspartate: step 3/3. It functions in the pathway amino-acid biosynthesis; L-threonine biosynthesis; L-threonine from L-aspartate: step 1/5. Its pathway is amino-acid biosynthesis; L-threonine biosynthesis; L-threonine from L-aspartate: step 3/5. Inhibition of aspartate kinase activity by threonine and leucine and 3-fold activation by cysteine, isoleucine, valine, serine and alanine at 2.5 mM. Partial inhibition of homoserine dehydrogenase activity by threonine and cysteine (14% of activity remaining at saturation with either amino acid). No synergy between the effectors for both activation or inhibition. Functionally, bifunctional aspartate kinase and homoserine dehydrogenase that catalyzes the first and the third steps toward the synthesis of lysine, methionine and threonine from aspartate. The protein is Bifunctional aspartokinase/homoserine dehydrogenase 1, chloroplastic of Arabidopsis thaliana (Mouse-ear cress).